The primary structure comprises 278 residues: Shikimate dehydrogenase (NADP(+)) (278 aa).

Residues 18 to 20 (SKS) and threonine 65 each bind shikimate. Lysine 69 (proton acceptor) is an active-site residue. Glutamate 81 serves as a coordination point for NADP(+). 2 residues coordinate shikimate: asparagine 90 and aspartate 106. NADP(+) contacts are provided by residues 130 to 134 (GAGGA) and 154 to 159 (NRTFAK). A shikimate-binding site is contributed by tyrosine 223. Glycine 241 provides a ligand contact to NADP(+).

The protein belongs to the shikimate dehydrogenase family. As to quaternary structure, homodimer.

It catalyses the reaction shikimate + NADP(+) = 3-dehydroshikimate + NADPH + H(+). It participates in metabolic intermediate biosynthesis; chorismate biosynthesis; chorismate from D-erythrose 4-phosphate and phosphoenolpyruvate: step 4/7. In terms of biological role, involved in the biosynthesis of the chorismate, which leads to the biosynthesis of aromatic amino acids. Catalyzes the reversible NADPH linked reduction of 3-dehydroshikimate (DHSA) to yield shikimate (SA). The protein is Shikimate dehydrogenase (NADP(+)) of Vibrio cholerae serotype O1 (strain ATCC 39541 / Classical Ogawa 395 / O395).